A 349-amino-acid polypeptide reads, in one-letter code: Cbb3-type cytochrome c oxidase subunit CcoP (349 aa).

Residues 1 to 67 (MADTDDEHAS…RVVRDRKGGR (67 aa)) form a disordered region. Residues 1–96 (MADTDDEHAS…NPLPRWWLWT (96 aa)) are Cytoplasmic-facing. Basic and acidic residues predominate over residues 16-30 (NRIELERQAADEAHK). Residues 97–117 (FYATIVWGVLYLIAYPAIPLV) traverse the membrane as a helical segment. The Periplasmic segment spans residues 118–349 (NGATQGLLGQ…AYVHSLGGGE (232 aa)). Cytochrome c domains are found at residues 168–258 (YTAN…LELG) and 265–346 (ALAA…HSLG). Positions 181, 184, 185, 233, 278, 281, 282, and 323 each coordinate heme c.

Belongs to the CcoP / FixP family. Component of the cbb3-type cytochrome c oxidase at least composed of CcoN, CcoO, CcoQ and CcoP. Heme c is required as a cofactor.

It localises to the cell inner membrane. It functions in the pathway energy metabolism; oxidative phosphorylation. Functionally, C-type cytochrome. Part of the cbb3-type cytochrome c oxidase complex. CcoP subunit is required for transferring electrons from donor cytochrome c via its heme groups to CcoO subunit. From there, electrons are shuttled to the catalytic binuclear center of CcoN subunit where oxygen reduction takes place. The complex also functions as a proton pump. The polypeptide is Cbb3-type cytochrome c oxidase subunit CcoP (Paracoccus denitrificans (strain Pd 1222)).